A 602-amino-acid chain; its full sequence is Elongation factor 4 (602 aa).

In terms of domain architecture, tr-type G spans 7–189; the sequence is NNIRNFSIIA…RILTAVPPPQ (183 aa). Residues 19–24 and 136–139 each bind GTP; these read DHGKST and NKID.

Belongs to the TRAFAC class translation factor GTPase superfamily. Classic translation factor GTPase family. LepA subfamily.

The protein resides in the cell inner membrane. It catalyses the reaction GTP + H2O = GDP + phosphate + H(+). Required for accurate and efficient protein synthesis under certain stress conditions. May act as a fidelity factor of the translation reaction, by catalyzing a one-codon backward translocation of tRNAs on improperly translocated ribosomes. Back-translocation proceeds from a post-translocation (POST) complex to a pre-translocation (PRE) complex, thus giving elongation factor G a second chance to translocate the tRNAs correctly. Binds to ribosomes in a GTP-dependent manner. The protein is Elongation factor 4 of Protochlamydia amoebophila (strain UWE25).